A 164-amino-acid chain; its full sequence is C-phycoerythrin class 1 subunit alpha (164 aa).

(2R,3E)-phycoerythrobilin is bound by residues cysteine 82 and cysteine 139.

The protein belongs to the phycobiliprotein family. Heterodimer of an alpha and a beta chain. Contains one covalently linked bilin chromophore.

The protein localises to the cellular thylakoid membrane. Functionally, light-harvesting photosynthetic bile pigment-protein from the phycobiliprotein complex. This chain is C-phycoerythrin class 1 subunit alpha (cpeA), found in Synechococcus sp. (strain WH7803).